The chain runs to 237 residues: Immunoglobulin superfamily member 6 (237 aa).

An N-terminal signal peptide occupies residues 1-27 (MGPVSARRSRLRPEISLILFQVGMVGA). Topologically, residues 28 to 152 (CTVYVLQPGY…ERLFSKEVRS (125 aa)) are extracellular. An Ig-like C2-type domain is found at 30–134 (VYVLQPGYLE…ELSPSAKHVG (105 aa)). An intrachain disulfide couples cysteine 51 to cysteine 118. A helical transmembrane segment spans residues 153-173 (FLIVLLALLSVYITGVCVTFI). The Cytoplasmic portion of the chain corresponds to 174 to 237 (VLFKSKSNGP…RKALPNPGRA (64 aa)). Positions 215-229 (TSHLPEQEGTDENRK) are enriched in basic and acidic residues. The tract at residues 215–237 (TSHLPEQEGTDENRKALPNPGRA) is disordered.

Ubiquitous with higher expression in immune tissue.

The protein localises to the membrane. In Mus musculus (Mouse), this protein is Immunoglobulin superfamily member 6 (Igsf6).